Here is a 716-residue protein sequence, read N- to C-terminus: ATP-dependent DNA helicase DinG (716 aa).

The 278-residue stretch at 17–294 folds into the Helicase ATP-binding domain; the sequence is ALQEQIPDFI…TCMEQFRPKT (278 aa). Residue 54–61 participates in ATP binding; the sequence is APTGVGKT. C120 lines the [4Fe-4S] cluster pocket. The DEAH box signature appears at 131–134; that stretch reads EPTQ. [4Fe-4S] cluster-binding residues include C194, C199, and C205. The short motif at 248 to 251 is the DEAH box element; sequence DEGH. One can recognise a Helicase C-terminal domain in the interval 517–698; sequence HIAEMAAFFR…VFPIEQPEVP (182 aa).

This sequence belongs to the helicase family. DinG subfamily. Type 1 sub-subfamily. The cofactor is [4Fe-4S] cluster.

The enzyme catalyses Couples ATP hydrolysis with the unwinding of duplex DNA at the replication fork by translocating in the 5'-3' direction. This creates two antiparallel DNA single strands (ssDNA). The leading ssDNA polymer is the template for DNA polymerase III holoenzyme which synthesizes a continuous strand.. It carries out the reaction ATP + H2O = ADP + phosphate + H(+). DNA-dependent ATPase and 5'-3' DNA helicase. Unwinds D-loops, R-loops, forked DNA and G-quadruplex DNA. The protein is ATP-dependent DNA helicase DinG of Escherichia coli O157:H7.